A 240-amino-acid polypeptide reads, in one-letter code: Keratinocyte-associated protein 3 (240 aa).

The next 4 helical transmembrane spans lie at 21–41, 63–83, 95–115, and 163–183; these read VGLALILVGHVNLLLGAVLHG, VISVGSGLLSVSLGLVALLAS, LLALALVNLLLSAACSLGLLL, and ALALWIPSVFMSAAEAALSGY.

It belongs to the TMEM54 family.

The protein localises to the membrane. This chain is Keratinocyte-associated protein 3 (KRTCAP3), found in Bos taurus (Bovine).